The primary structure comprises 269 residues: Propanediol uptake facilitator PduF (269 aa).

A run of 2 helical transmembrane segments spans residues 10–30 and 42–62; these read IAEF…LSAL and ICII…GISG. The short motif at 66-68 is the NPA 1 element; that stretch reads NPA. 3 helical membrane-spanning segments follow: residues 69–89, 143–163, and 179–199; these read ITIA…PYTV, VWQA…MIMA, and LLIG…TGFA. The NPA 2 signature appears at 201-203; it reads NPA. Residues 228-248 form a helical membrane-spanning segment; that stretch reads IPYFIVPIVAPIIGACAGAAI.

It belongs to the MIP/aquaporin (TC 1.A.8) family.

It is found in the cell inner membrane. Its function is as follows. Probably facilitates diffusion of 1,2-propanediol (1,2-PD) into the cell. This is Propanediol uptake facilitator PduF from Citrobacter freundii.